The sequence spans 105 residues: MAKMFDLRTKIMIGIGSSLLVAAMVLLSVVFCLYFKVAKALKAAKDPDAVAVKNHNPDKVCWATNSQAKATTMESCPSLQCCEGCRMHASSDSLPPCCCDINEGL.

The first 32 residues, 1 to 32 (MAKMFDLRTKIMIGIGSSLLVAAMVLLSVVFC), serve as a signal peptide directing secretion.

The protein belongs to the FAM24 family.

It localises to the secreted. This chain is Protein FAM24A (FAM24A), found in Homo sapiens (Human).